A 216-amino-acid polypeptide reads, in one-letter code: Ribosome maturation factor RimP (216 aa).

Belongs to the RimP family.

The protein localises to the cytoplasm. Its function is as follows. Required for maturation of 30S ribosomal subunits. This is Ribosome maturation factor RimP from Bartonella henselae (strain ATCC 49882 / DSM 28221 / CCUG 30454 / Houston 1) (Rochalimaea henselae).